The primary structure comprises 224 residues: Cutinase 1 (224 aa).

The N-terminal stretch at 1–16 (MKFLSVLSLAITLAAA) is a signal peptide. The cysteines at positions 46 and 125 are disulfide-linked. Residue serine 136 is the Nucleophile of the active site. Cysteine 187 and cysteine 194 are disulfide-bonded. The active site involves aspartate 191. Histidine 204 functions as the Proton donor/acceptor in the catalytic mechanism.

The protein belongs to the cutinase family. Post-translationally, the 2 disulfide bonds play a critical role in holding the catalytic residues in juxta-position; reduction of the disulfide bridges results in the complete inactivation of the enzyme. In terms of processing, the N-terminus is blocked.

Its subcellular location is the secreted. The enzyme catalyses cutin + H2O = cutin monomers.. With respect to regulation, inhibited by diisopropyl fluorophosphate (DFP). Catalyzes the hydrolysis of complex carboxylic polyesters found in the cell wall of plants. Degrades cutin, a macromolecule that forms the structure of the plant cuticle. Allows pathogenic fungi to penetrate through the cuticular barrier into the host plant during the initial stage of fungal infection. The sequence is that of Cutinase 1 (CUTA) from Colletotrichum gloeosporioides (Anthracnose fungus).